Consider the following 324-residue polypeptide: Myoblast determination protein 1 homolog (324 aa).

The segment at 125–146 is disordered; it reads VDSQHEDTTTSTAGGAGVGGPR. Residues 155–206 enclose the bHLH domain; that stretch reads DRRKAATMRERRRLRKVNEAFEVVKQRTCPNPNQRLPKVEILRSAIDYINNL. Positions 251-272 are disordered; it reads YNPENMFDDDDLTDSDDDRDHH. Residues 256 to 267 show a composition bias toward acidic residues; that stretch reads MFDDDDLTDSDD.

In terms of assembly, efficient DNA binding requires dimerization with another bHLH protein. Body wall muscle cells; in clonal muscle precursors, in a set of early embryonic blastomeres (the ms-granddaughters), and in six glial-like cells called GLRS.

It is found in the nucleus. Functionally, involved in myogenesis, in cooperation with transcription factors unc-120 and hnd-1. Acts redundantly with fozi-1 to promote body wall muscle cell and coelomocyte specification in postembryonic mesoderm progenitors, probably through suppression of sem-2. The sequence is that of Myoblast determination protein 1 homolog from Caenorhabditis elegans.